A 345-amino-acid polypeptide reads, in one-letter code: Ribosomal RNA large subunit methyltransferase F (345 aa).

The span at 1–14 shows a compositional bias: polar residues; that stretch reads MTSKPMTRRPTANN. Disordered stretches follow at residues 1 to 35 and 225 to 258; these read MTSKPMTRRPTANNHRNRSPETAKKLGQLHPRNPH and EANSRKQHNLQRHRGKNENEQISRSSTKSGNAAQ. A compositionally biased stretch (basic residues) spans 229-239; the sequence is RKQHNLQRHRG. Residues 246–258 are compositionally biased toward polar residues; that stretch reads ISRSSTKSGNAAQ.

Belongs to the methyltransferase superfamily. METTL16/RlmF family.

It is found in the cytoplasm. It catalyses the reaction adenosine(1618) in 23S rRNA + S-adenosyl-L-methionine = N(6)-methyladenosine(1618) in 23S rRNA + S-adenosyl-L-homocysteine + H(+). In terms of biological role, specifically methylates the adenine in position 1618 of 23S rRNA. The chain is Ribosomal RNA large subunit methyltransferase F from Psychrobacter arcticus (strain DSM 17307 / VKM B-2377 / 273-4).